The sequence spans 142 residues: Universal stress protein C (142 aa).

The protein belongs to the universal stress protein A family.

Its subcellular location is the cytoplasm. In terms of biological role, required for resistance to DNA-damaging agents. The chain is Universal stress protein C (uspC) from Escherichia coli O157:H7.